A 258-amino-acid polypeptide reads, in one-letter code: Putative ankyrin repeat domain-containing protein 30B-like (258 aa).

The tract at residues 1–21 (MERLSAAPVKGQTGPERPSPF) is disordered. 4 ANK repeats span residues 71 to 100 (KKRT…QLDV), 104 to 133 (ENRT…DPNI), 137 to 166 (YGNT…DIEV), and 170 to 199 (AGHT…NANA). The segment at 216-258 (KISKNSQNSNPEGTSEGTPDEAAPLAERTPDTAESLVERTPDE) is disordered. Residues 218–232 (SKNSQNSNPEGTSEG) show a composition bias toward polar residues. The span at 243–258 (RTPDTAESLVERTPDE) shows a compositional bias: basic and acidic residues.

This Homo sapiens (Human) protein is Putative ankyrin repeat domain-containing protein 30B-like (ANKRD30BL).